Consider the following 39-residue polypeptide: Large ribosomal subunit protein bL36 (39 aa).

This sequence belongs to the bacterial ribosomal protein bL36 family.

This is Large ribosomal subunit protein bL36 from Leuconostoc mesenteroides subsp. mesenteroides (strain ATCC 8293 / DSM 20343 / BCRC 11652 / CCM 1803 / JCM 6124 / NCDO 523 / NBRC 100496 / NCIMB 8023 / NCTC 12954 / NRRL B-1118 / 37Y).